The sequence spans 296 residues: Transcription factor MYB72 (296 aa).

2 consecutive HTH myb-type domains span residues 11–63 (KNKV…INYL) and 64–118 (RPDV…KKRL). 2 DNA-binding regions (H-T-H motif) span residues 39-63 (WRSLPKLAGLLRCGKSCRLRWINYL) and 91-114 (WSKIASFLPGRTDNEIKNVWNTHL). Residues 118–144 (LTPSSSSSSLSSTHDQSTKADHDKNCD) form a disordered region. Over residues 133–144 (QSTKADHDKNCD) the composition is skewed to basic and acidic residues.

In terms of assembly, interacts with EIL3.

It is found in the nucleus. Functionally, involved in metal ions homeostasis, including iron ions (Fe) acquisition, via the regulation of NAS4 and NAS2 genes expression. Necessary for plant survival in alkaline soil where iron availability is greatly restricted. Involved in the up-regulation of several biosynthesis genes of secondary metabolites involved in iron uptake under conditions of iron deficiency. Triggers tolerance to nickel (Ni) and zinc (Zn) ions. Required in the roots during early signaling steps of rhizobacteria-mediated (e.g. P.fluorescens WCS417r) and beneficial fungi-mediated (e.g. T.asperellum T34) broad-spectrum induced systemic resistance (ISR) against several pathogens (e.g. P.syringae pv tomato, H.parasitica, P.cucumerina, A.brassicicola and B.cinerea) and implying enhanced callose deposition. Required for the induction of some genes (e.g. BGLU42) upon rhizobacteria-mediated ISR. The sequence is that of Transcription factor MYB72 from Arabidopsis thaliana (Mouse-ear cress).